Reading from the N-terminus, the 121-residue chain is Basic phospholipase A2 VRV-PL-VIIIa (121 aa).

Cystine bridges form between C26/C115, C28/C44, C43/C95, C49/C121, C50/C88, C57/C81, and C75/C86. Ca(2+) contacts are provided by Y27, G29, and G31. The active site involves H47. A Ca(2+)-binding site is contributed by D48. D89 is an active-site residue.

It belongs to the phospholipase A2 family. Group II subfamily. D49 sub-subfamily. Monomer. Ca(2+) is required as a cofactor. In terms of tissue distribution, expressed by the venom gland.

Its subcellular location is the secreted. The enzyme catalyses a 1,2-diacyl-sn-glycero-3-phosphocholine + H2O = a 1-acyl-sn-glycero-3-phosphocholine + a fatty acid + H(+). Oxyphenbutazone (OPB), anisic acid and atropine inhibit the enzymatic activity by binding at the substrate-binding site. P-coumaric acid, resveratrol, spermidine, corticosterone and gramine derivative inhibit the enzymatic activity by binding at the substrate-binding site. Its function is as follows. Snake venom phospholipase A2 (PLA2) that shows weak neurotoxicity and medium anticoagulant effects by binding to factor Xa (F10) and inhibiting the prothrombinase activity (IC(50) is 130 nM). It also damages vital organs such as lung, liver and kidney, displays edema-inducing activities when injected into the foot pads of mice and induces necrosis of muscle cells when injected into the thigh muscle. Has a low enzymatic activity. PLA2 catalyzes the calcium-dependent hydrolysis of the 2-acyl groups in 3-sn-phosphoglycerides. The sequence is that of Basic phospholipase A2 VRV-PL-VIIIa from Daboia russelii (Russel's viper).